Here is a 490-residue protein sequence, read N- to C-terminus: ATP synthase subunit beta (490 aa).

ATP is bound at residue 173–180 (GGAGVGKT).

The protein belongs to the ATPase alpha/beta chains family. F-type ATPases have 2 components, CF(1) - the catalytic core - and CF(0) - the membrane proton channel. CF(1) has five subunits: alpha(3), beta(3), gamma(1), delta(1), epsilon(1). CF(0) has three main subunits: a(1), b(2) and c(9-12). The alpha and beta chains form an alternating ring which encloses part of the gamma chain. CF(1) is attached to CF(0) by a central stalk formed by the gamma and epsilon chains, while a peripheral stalk is formed by the delta and b chains.

The protein resides in the cell membrane. The enzyme catalyses ATP + H2O + 4 H(+)(in) = ADP + phosphate + 5 H(+)(out). Produces ATP from ADP in the presence of a proton gradient across the membrane. The catalytic sites are hosted primarily by the beta subunits. This Bifidobacterium longum (strain DJO10A) protein is ATP synthase subunit beta.